A 392-amino-acid polypeptide reads, in one-letter code: Probable tRNA sulfurtransferase (392 aa).

A THUMP domain is found at 59–166 (DEIIERVKKV…ECSFVFTKKV (108 aa)). ATP-binding positions include 183 to 184 (LL), 208 to 209 (HF), Arg-265, Gly-287, and Gln-296.

It belongs to the ThiI family.

The protein resides in the cytoplasm. It catalyses the reaction [ThiI sulfur-carrier protein]-S-sulfanyl-L-cysteine + a uridine in tRNA + 2 reduced [2Fe-2S]-[ferredoxin] + ATP + H(+) = [ThiI sulfur-carrier protein]-L-cysteine + a 4-thiouridine in tRNA + 2 oxidized [2Fe-2S]-[ferredoxin] + AMP + diphosphate. It carries out the reaction [ThiS sulfur-carrier protein]-C-terminal Gly-Gly-AMP + S-sulfanyl-L-cysteinyl-[cysteine desulfurase] + AH2 = [ThiS sulfur-carrier protein]-C-terminal-Gly-aminoethanethioate + L-cysteinyl-[cysteine desulfurase] + A + AMP + 2 H(+). The protein operates within cofactor biosynthesis; thiamine diphosphate biosynthesis. In terms of biological role, catalyzes the ATP-dependent transfer of a sulfur to tRNA to produce 4-thiouridine in position 8 of tRNAs, which functions as a near-UV photosensor. Also catalyzes the transfer of sulfur to the sulfur carrier protein ThiS, forming ThiS-thiocarboxylate. This is a step in the synthesis of thiazole, in the thiamine biosynthesis pathway. The sulfur is donated as persulfide by IscS. This Alkaliphilus metalliredigens (strain QYMF) protein is Probable tRNA sulfurtransferase.